The chain runs to 335 residues: Beta-ketoacyl-[acyl-carrier-protein] synthase III 3 (335 aa).

Residues Cys114 and His256 contribute to the active site. The ACP-binding stretch occupies residues 257–261 (QANHR). Asn286 is a catalytic residue.

This sequence belongs to the thiolase-like superfamily. FabH family. In terms of assembly, homodimer.

The protein localises to the cytoplasm. It catalyses the reaction malonyl-[ACP] + acetyl-CoA + H(+) = 3-oxobutanoyl-[ACP] + CO2 + CoA. The protein operates within lipid metabolism; fatty acid biosynthesis. In terms of biological role, catalyzes the condensation reaction of fatty acid synthesis by the addition to an acyl acceptor of two carbons from malonyl-ACP. Catalyzes the first condensation reaction which initiates fatty acid synthesis and may therefore play a role in governing the total rate of fatty acid production. Possesses both acetoacetyl-ACP synthase and acetyl transacylase activities. Its substrate specificity determines the biosynthesis of branched-chain and/or straight-chain of fatty acids. The chain is Beta-ketoacyl-[acyl-carrier-protein] synthase III 3 from Streptomyces coelicolor (strain ATCC BAA-471 / A3(2) / M145).